The following is a 195-amino-acid chain: MKASLITAFVLPLLALASPYLPTDPPANIEVTARHPGRENVDKLPMQAAGRAFWLGGSPATYCPEIVGDNCPPGNATVILGLNSMSVLVPGGQQMYVEPSGKLGFTQAHSAAIPPGSYVGGFAYKPLNKKSGSFYFGGWGATALMACPVPDSKYYQVFANIKNAMVPGGDVKKCVEFVGVAKEYKGTTPAAWQYT.

The N-terminal stretch at 1–17 is a signal peptide; that stretch reads MKASLITAFVLPLLALA. Asn75 carries an N-linked (GlcNAc...) asparagine glycan.

The protein localises to the secreted. This is an uncharacterized protein from Arthroderma benhamiae (strain ATCC MYA-4681 / CBS 112371) (Trichophyton mentagrophytes).